The chain runs to 916 residues: Protein translocase subunit SecA (916 aa).

ATP is bound by residues Q87, 105–109, and D507; that span reads GEGKT. Zn(2+)-binding residues include C900, C902, C911, and H912.

It belongs to the SecA family. As to quaternary structure, monomer and homodimer. Part of the essential Sec protein translocation apparatus which comprises SecA, SecYEG and auxiliary proteins SecDF-YajC and YidC. Requires Zn(2+) as cofactor.

It localises to the cell inner membrane. Its subcellular location is the cytoplasm. The catalysed reaction is ATP + H2O + cellular proteinSide 1 = ADP + phosphate + cellular proteinSide 2.. Functionally, part of the Sec protein translocase complex. Interacts with the SecYEG preprotein conducting channel. Has a central role in coupling the hydrolysis of ATP to the transfer of proteins into and across the cell membrane, serving both as a receptor for the preprotein-SecB complex and as an ATP-driven molecular motor driving the stepwise translocation of polypeptide chains across the membrane. The protein is Protein translocase subunit SecA of Neisseria meningitidis serogroup A / serotype 4A (strain DSM 15465 / Z2491).